The chain runs to 433 residues: Ascus wall endo-1,3-alpha-glucanase (433 aa).

It belongs to the glycosyl hydrolase 71 family.

It localises to the ascus epiplasm. It carries out the reaction Endohydrolysis of (1-&gt;3)-alpha-D-glucosidic linkages in isolichenin, pseudonigeran and nigeran.. Functionally, promotes the release of ascospores from asci by hydrolyzing 1,3-alpha-glucan in the ascus wall. This Schizosaccharomyces pombe (strain 972 / ATCC 24843) (Fission yeast) protein is Ascus wall endo-1,3-alpha-glucanase.